A 36-amino-acid polypeptide reads, in one-letter code: U-metritoxin-Msn1a (36 aa).

One can recognise a ShKT domain in the interval 4-36 (CKDKLPACGEYRGSFCKLEKVKSNCEKTCGVKC). Cystine bridges form between C4–C36, C11–C28, and C19–C32.

The protein belongs to the sea anemone type 1 potassium channel toxin family. Type 1b subfamily.

It is found in the secreted. The protein localises to the nematocyst. In terms of biological role, has hemolytic activity. Inhibits voltage-gated potassium channels (Kv1/KCNA). This is U-metritoxin-Msn1a from Metridium senile (Brown sea anemone).